A 509-amino-acid chain; its full sequence is Lanosterol 14-alpha demethylase (509 aa).

Residues 30–50 (GNLLSMLLIACAFTLSLVYLF) form a helical membrane-spanning segment. Cysteine 455 contacts heme.

It belongs to the cytochrome P450 family. Requires heme as cofactor. Ubiquitinated by MARCHF6, leading to proteasomal degradation.

Its subcellular location is the endoplasmic reticulum membrane. The protein resides in the microsome membrane. It catalyses the reaction a 14alpha-methyl steroid + 3 reduced [NADPH--hemoprotein reductase] + 3 O2 = a Delta(14) steroid + formate + 3 oxidized [NADPH--hemoprotein reductase] + 4 H2O + 4 H(+). It carries out the reaction lanosterol + 3 reduced [NADPH--hemoprotein reductase] + 3 O2 = 4,4-dimethyl-5alpha-cholesta-8,14,24-trien-3beta-ol + formate + 3 oxidized [NADPH--hemoprotein reductase] + 4 H2O + 4 H(+). The catalysed reaction is 24,25-dihydrolanosterol + 3 reduced [NADPH--hemoprotein reductase] + 3 O2 = 4,4-dimethyl-8,14-cholestadien-3beta-ol + formate + 3 oxidized [NADPH--hemoprotein reductase] + 4 H2O + 4 H(+). The enzyme catalyses a 14alpha-methyl steroid + reduced [NADPH--hemoprotein reductase] + O2 = a 14alpha-hydroxymethyl steroid + oxidized [NADPH--hemoprotein reductase] + H2O + H(+). It catalyses the reaction a 14alpha-hydroxymethyl steroid + reduced [NADPH--hemoprotein reductase] + O2 = a 14alpha-formyl steroid + oxidized [NADPH--hemoprotein reductase] + 2 H2O + H(+). It carries out the reaction a 14alpha-formyl steroid + reduced [NADPH--hemoprotein reductase] + O2 = a Delta(14) steroid + formate + oxidized [NADPH--hemoprotein reductase] + H2O + 2 H(+). The catalysed reaction is lanosterol + reduced [NADPH--hemoprotein reductase] + O2 = 32-hydroxylanosterol + oxidized [NADPH--hemoprotein reductase] + H2O + H(+). The enzyme catalyses 32-hydroxylanosterol + reduced [NADPH--hemoprotein reductase] + O2 = 32-oxolanosterol + oxidized [NADPH--hemoprotein reductase] + 2 H2O + H(+). It catalyses the reaction 32-oxolanosterol + reduced [NADPH--hemoprotein reductase] + O2 = 4,4-dimethyl-5alpha-cholesta-8,14,24-trien-3beta-ol + formate + oxidized [NADPH--hemoprotein reductase] + H2O + 2 H(+). It carries out the reaction 24,25-dihydrolanosterol + reduced [NADPH--hemoprotein reductase] + O2 = 32-hydroxy-24,25-dihydrolanosterol + oxidized [NADPH--hemoprotein reductase] + H2O + H(+). The catalysed reaction is 32-hydroxy-24,25-dihydrolanosterol + reduced [NADPH--hemoprotein reductase] + O2 = 32-oxo-24,25-dihydrolanosterol + oxidized [NADPH--hemoprotein reductase] + 2 H2O + H(+). The enzyme catalyses 32-oxo-24,25-dihydrolanosterol + reduced [NADPH--hemoprotein reductase] + O2 = 4,4-dimethyl-8,14-cholestadien-3beta-ol + formate + oxidized [NADPH--hemoprotein reductase] + H2O + 2 H(+). It participates in steroid biosynthesis; zymosterol biosynthesis; zymosterol from lanosterol: step 1/6. With respect to regulation, inhibited by azalanstat. Inhibited by azole antifungal agents ketoconazole, itraconazole and fluconazole. Functionally, sterol 14alpha-demethylase that plays a critical role in the cholesterol biosynthesis pathway, being cholesterol the major sterol component in mammalian membranes as well as a precursor for bile acid and steroid hormone synthesis. Cytochrome P450 monooxygenase that catalyzes the three-step oxidative removal of the 14alpha-methyl group (C-32) of sterols such as lanosterol (lanosta-8,24-dien-3beta-ol) and 24,25-dihydrolanosterol (DHL) in the form of formate, and converts the sterols to 4,4-dimethyl-5alpha-cholesta-8,14,24-trien-3beta-ol and 4,4-dimethyl-8,14-cholestadien-3beta-ol, respectively, which are intermediates of cholesterol biosynthesis. Can also demethylate substrates not intrinsic to mammals, such as eburicol (24-methylene-24,25-dihydrolanosterol), but at a lower rate than DHL. This Pongo abelii (Sumatran orangutan) protein is Lanosterol 14-alpha demethylase.